The primary structure comprises 175 residues: Pre-mRNA-splicing factor SNT309 (175 aa).

In terms of assembly, belongs to the NTC complex (or PRP19-associated complex), composed of at least CEF1, CLF1, ISY1, NTC20, SNT309, SYF1, SYF2, and PRP19. The NTC complex associates with the spliceosome after the release of the U1 and U4 snRNAs and forms the CWC spliceosome subcomplex (or CEF1-associated complex) reminiscent of a late-stage spliceosome composed also of the U2, U5 and U6 snRNAs and at least BUD13, BUD31, BRR2, CDC40, CUS1, CWC2, CWC15, CWC21, CWC22, CWC23, CWC24, CWC25, CWC27, ECM2, HSH155, IST3, LEA1, MSL1, PRP8, PRP9, PRP11, PRP21, PRP22, PRP45, PRP46, SLU7, SMB1, SMD1, SMD2, SMD3, SMX2, SMX3, SNU114, SPP2, RSE1 and YJU2. Interacts with PRP19.

It localises to the nucleus. Functionally, involved in pre-mRNA splicing by stabilizing the NTC (or PRP19-associated complex). As a component of the NTC complex, associates to the spliceosome to mediate conformational rearrangement or to stabilize the structure of the spliceosome after U4 snRNA dissociation, which leads to spliceosome maturation. The polypeptide is Pre-mRNA-splicing factor SNT309 (SNT309) (Saccharomyces cerevisiae (strain ATCC 204508 / S288c) (Baker's yeast)).